Here is a 139-residue protein sequence, read N- to C-terminus: Probable disulfide formation protein C (139 aa).

A helical transmembrane segment spans residues 8–27 (EYALLTAWGASFIATLGSLY). C37 and C40 are disulfide-bonded. Helical transmembrane passes span 42–61 (YQRI…VAKK) and 68–85 (YSLP…YHYA). Residues C99 and C104 are joined by a disulfide bond. A helical transmembrane segment spans residues 113 to 135 (GFVTIPFLALIGFITIAVCSFIV).

This sequence belongs to the DsbB family. BdbC subfamily.

The protein localises to the cell membrane. Required for disulfide bond formation in some proteins. The chain is Probable disulfide formation protein C from Bacillus cereus (strain ATCC 14579 / DSM 31 / CCUG 7414 / JCM 2152 / NBRC 15305 / NCIMB 9373 / NCTC 2599 / NRRL B-3711).